The sequence spans 344 residues: L-sulfolactate dehydrogenase (344 aa).

The protein belongs to the LDH2/MDH2 oxidoreductase family.

It is found in the cytoplasm. The enzyme catalyses a (2S)-2-hydroxycarboxylate + NAD(+) = a 2-oxocarboxylate + NADH + H(+). It participates in cofactor biosynthesis; coenzyme M biosynthesis; sulfoacetaldehyde from phosphoenolpyruvate and sulfite: step 3/4. It functions in the pathway cofactor biosynthesis; 5,6,7,8-tetrahydromethanopterin biosynthesis. Functionally, catalyzes the reduction of sulfopyruvate to (R)-sulfolactate much more efficiently than the reverse reaction. Also catalyzes the reduction of oxaloacetate, alpha-ketoglutarate, and to a much lower extent, KHTCA, but not pyruvate. Involved in the biosynthesis of both coenzyme M (with (R)-sulfolactate) and methanopterin (with alpha-ketoglutarate). The chain is L-sulfolactate dehydrogenase (comC) from Methanocaldococcus jannaschii (strain ATCC 43067 / DSM 2661 / JAL-1 / JCM 10045 / NBRC 100440) (Methanococcus jannaschii).